A 222-amino-acid chain; its full sequence is Triosephosphate isomerase (222 aa).

Position 10–12 (10–12 (NCK)) interacts with substrate. Residue H93 is the Electrophile of the active site. E141 functions as the Proton acceptor in the catalytic mechanism. Residues I146, G180, and 201–202 (AS) each bind substrate.

Belongs to the triosephosphate isomerase family. As to quaternary structure, homotetramer; dimer of dimers.

The protein localises to the cytoplasm. It catalyses the reaction D-glyceraldehyde 3-phosphate = dihydroxyacetone phosphate. It functions in the pathway carbohydrate biosynthesis; gluconeogenesis. Its pathway is carbohydrate degradation; glycolysis; D-glyceraldehyde 3-phosphate from glycerone phosphate: step 1/1. Functionally, involved in the gluconeogenesis. Catalyzes stereospecifically the conversion of dihydroxyacetone phosphate (DHAP) to D-glyceraldehyde-3-phosphate (G3P). In Cenarchaeum symbiosum (strain A), this protein is Triosephosphate isomerase.